The following is a 393-amino-acid chain: Arginine biosynthesis bifunctional protein ArgJ (393 aa).

6 residues coordinate substrate: Thr-142, Lys-168, Thr-179, Glu-265, Asn-388, and Ser-393. The active-site Nucleophile is Thr-179.

The protein belongs to the ArgJ family. As to quaternary structure, heterotetramer of two alpha and two beta chains.

It localises to the cytoplasm. The enzyme catalyses N(2)-acetyl-L-ornithine + L-glutamate = N-acetyl-L-glutamate + L-ornithine. The catalysed reaction is L-glutamate + acetyl-CoA = N-acetyl-L-glutamate + CoA + H(+). It participates in amino-acid biosynthesis; L-arginine biosynthesis; L-ornithine and N-acetyl-L-glutamate from L-glutamate and N(2)-acetyl-L-ornithine (cyclic): step 1/1. It functions in the pathway amino-acid biosynthesis; L-arginine biosynthesis; N(2)-acetyl-L-ornithine from L-glutamate: step 1/4. In terms of biological role, catalyzes two activities which are involved in the cyclic version of arginine biosynthesis: the synthesis of N-acetylglutamate from glutamate and acetyl-CoA as the acetyl donor, and of ornithine by transacetylation between N(2)-acetylornithine and glutamate. The protein is Arginine biosynthesis bifunctional protein ArgJ of Desulfotalea psychrophila (strain LSv54 / DSM 12343).